Consider the following 299-residue polypeptide: Putative pyrroline-5-carboxylate reductase 4 (299 aa).

The protein belongs to the pyrroline-5-carboxylate reductase family.

It carries out the reaction L-proline + NADP(+) = (S)-1-pyrroline-5-carboxylate + NADPH + 2 H(+). It catalyses the reaction L-proline + NAD(+) = (S)-1-pyrroline-5-carboxylate + NADH + 2 H(+). The protein operates within amino-acid biosynthesis; L-proline biosynthesis; L-proline from L-glutamate 5-semialdehyde: step 1/1. This chain is Putative pyrroline-5-carboxylate reductase 4, found in Caenorhabditis elegans.